Here is a 434-residue protein sequence, read N- to C-terminus: Ataxin-10 homolog (434 aa).

This sequence belongs to the ataxin-10 family.

The protein resides in the cytoplasm. It localises to the nucleus. Its function is as follows. May play a role in the regulation of cytokinesis. The protein is Ataxin-10 homolog (mug160) of Schizosaccharomyces pombe (strain 972 / ATCC 24843) (Fission yeast).